The sequence spans 264 residues: Carbonic anhydrase 7 (264 aa).

One can recognise an Alpha-carbonic anhydrase domain in the interval 5-262; it reads HGWGYGQDDG…LKGRVVKASF (258 aa). Residue His66 is the Proton donor/acceptor of the active site. Zn(2+)-binding residues include His96, His98, and His121. 201-202 provides a ligand contact to substrate; sequence TT.

The protein belongs to the alpha-carbonic anhydrase family. Zn(2+) is required as a cofactor.

It localises to the cytoplasm. It catalyses the reaction hydrogencarbonate + H(+) = CO2 + H2O. With respect to regulation, activated by histamine, L-adrenaline, L- and D-histidine, and L- and D-phenylalanine. Inhibited by coumarins, sulfonamide derivatives such as acetazolamide (AZA), by saccharin and Foscarnet (phosphonoformate trisodium salt). In terms of biological role, reversible hydration of carbon dioxide. This Homo sapiens (Human) protein is Carbonic anhydrase 7 (CA7).